We begin with the raw amino-acid sequence, 561 residues long: Putative transport protein YbjL (561 aa).

A run of 5 helical transmembrane segments spans residues 8-28 (LLNGNYILLLFVVLALGLCLG), 32-52 (LGSVQLGNSIGVLVVSLLLGQ), 66-86 (FMLFIFCVGVEAGPNFFSIFF), 94-114 (MLALVMVGSALLIALGLGKLF), and 158-178 (NLSLGYALTYLIGLVSLIVGA). RCK C-terminal domains follow at residues 200–288 (RGLD…SFRN) and 292–373 (VFDR…RIGF). Helical transmembrane passes span 383–403 (LLAFCAFFIIGLMIGMITFQF), 406–426 (FSFGIGNAAGLLFAGIMLGFL), 447–467 (FGLMVFMAGVGLSAGSGISNG), 475–495 (MLIAGLVVSLIPVVICFLFGA), and 540–560 (AIANVLLTLAGTLIVIIWPGL).

The protein belongs to the AAE transporter (TC 2.A.81) family. YbjL subfamily.

The protein resides in the cell membrane. This chain is Putative transport protein YbjL, found in Salmonella typhi.